The sequence spans 185 residues: A-type ATP synthase subunit E (185 aa).

The protein belongs to the V-ATPase E subunit family. In terms of assembly, has multiple subunits with at least A(3), B(3), C, D, E, F, H, I and proteolipid K(x).

It localises to the cell membrane. Functionally, component of the A-type ATP synthase that produces ATP from ADP in the presence of a proton gradient across the membrane. This chain is A-type ATP synthase subunit E, found in Thermoplasma acidophilum (strain ATCC 25905 / DSM 1728 / JCM 9062 / NBRC 15155 / AMRC-C165).